The chain runs to 271 residues: Small ribosomal subunit protein uS2 (271 aa).

The tract at residues 223–271 is disordered; that stretch reads RALAGSEEGEATEEVTPASEAEKQEVLAEAMSEEGDALQESEVVEEEEK. The span at 253-271 shows a compositional bias: acidic residues; sequence MSEEGDALQESEVVEEEEK.

This sequence belongs to the universal ribosomal protein uS2 family.

The chain is Small ribosomal subunit protein uS2 from Wolinella succinogenes (strain ATCC 29543 / DSM 1740 / CCUG 13145 / JCM 31913 / LMG 7466 / NCTC 11488 / FDC 602W) (Vibrio succinogenes).